A 675-amino-acid polypeptide reads, in one-letter code: Putative methyl-accepting chemotaxis AlkN (675 aa).

A run of 2 helical transmembrane segments spans residues 24 to 44 and 303 to 323; these read IALYVGLAIFIVLALANFLLS and FPSVWLGGVSAGLAVLFFFII. The HAMP domain occupies 343 to 394; it reads QRNQAAILRLLDELGDLADGDLTVQATVTEDFTGAIADSINYSIDQLRNLVQ. Residues 399 to 635 form the Methyl-accepting transducer domain; that stretch reads SAVQVASAAQ…HISNTMNVIQ (237 aa).

This sequence belongs to the methyl-accepting chemotaxis (MCP) protein family.

The protein localises to the membrane. It participates in hydrocarbon metabolism; alkane degradation. In terms of biological role, chemotactic-signal transducers respond to changes in the concentration of attractants and repellents in the environment, transduce a signal from the outside to the inside of the cell, and facilitate sensory adaptation through the variation of the level of methylation. In Alcanivorax borkumensis (strain ATCC 700651 / DSM 11573 / NCIMB 13689 / SK2), this protein is Putative methyl-accepting chemotaxis AlkN.